The sequence spans 518 residues: Glycerophosphoinositol transporter 1 (518 aa).

Residues 1–44 (MEDKDITSVNEKEVNENTNPRIIKYDAERRATRTETSKKDKWKN) are Cytoplasmic-facing. The helical transmembrane segment at 45-65 (IVTIIASGFALISDGYVNGSM) threads the bilayer. The Extracellular portion of the chain corresponds to 66–91 (SMLNKVFVMEYGKKNYSSKVSTRVSN). Asn80 carries N-linked (GlcNAc...) asparagine glycosylation. A helical transmembrane segment spans residues 92–112 (AALVGIIFGQFFMGIAADYYS). At 113-114 (RK) the chain is on the cytoplasmic side. Residues 115–136 (SCILVATAILVIGSALCAASHG) form a helical membrane-spanning segment. The Extracellular segment spans residues 137 to 138 (TT). A helical transmembrane segment spans residues 139 to 159 (VPGMFWMLTVMRGLVGIGVGA). Residues 160–184 (EYPTSTLSANESANEYTTTKRGGIL) are Cytoplasmic-facing. The helical transmembrane segment at 185–205 (VMVTNLPLAFGGPFATIIFLI) threads the bilayer. At 206-216 (VYKICSGTKHL) the chain is on the extracellular side. A helical membrane pass occupies residues 217-237 (EAIWRTVFAIGCFWPLSVFYF). Residues 238–268 (RWKTATTEVYEKGRIKRNIPYFLALKFYWKR) are Cytoplasmic-facing. Residues 269-289 (LLGTCGTWFMYDFVTFPNGIF) form a helical membrane-spanning segment. Over 290 to 306 (SSTIISSVIKDQNDLVK) the chain is Extracellular. Residues 307–327 (VAEWNLLLGVLAVLGVPIGAY) form a helical membrane-spanning segment. Over 328–335 (LSDRIGRK) the chain is Cytoplasmic. A helical membrane pass occupies residues 336 to 356 (YTLMFGFSGYIIFGLIIGCAY). At 357–360 (DQLK) the chain is on the extracellular side. A helical transmembrane segment spans residues 361–381 (KITPLFIIFYAFMNMLGNAGP). The Cytoplasmic portion of the chain corresponds to 382-399 (GDMLGVISSEASATAVRG). The helical transmembrane segment at 400 to 420 (VFYGLSAVTGKIGSVVGVECF) threads the bilayer. At 421-430 (QPIRDNLGAR) the chain is on the extracellular side. A helical membrane pass occupies residues 431–451 (WTFIIAAICGLIGIIITYFFV). Residues 452-518 (PHSLESDLMK…IISVRQVDQS (67 aa)) lie on the Cytoplasmic side of the membrane.

This sequence belongs to the major facilitator superfamily. Sugar transporter (TC 2.A.1.1) family.

The protein localises to the cell membrane. The enzyme catalyses sn-glycerol 3-phosphocholine(out) = sn-glycerol 3-phosphocholine(in). It carries out the reaction sn-glycero-3-phospho-1D-myo-inositol(out) = sn-glycero-3-phospho-1D-myo-inositol(in). Functionally, glycerophosphodiester transporter that mediates uptake of both glycerophosphoinositol (GroPIns) and glycerophosphocholine (GroPCho) as sources of the nutrients inositol and phosphate. The protein is Glycerophosphoinositol transporter 1 of Saccharomyces cerevisiae (strain ATCC 204508 / S288c) (Baker's yeast).